The chain runs to 104 residues: MENVQEVREQLLSVLAGLDVLVGSTINTKFSSKEVQTIVLNELSAKLRKEIMGLVMLMLQTDEEAAEFADGLDLGISLEKKRQHWHDIGQSIYISHERSLGIEI.

This is an uncharacterized protein from Acidithiobacillus ferridurans.